We begin with the raw amino-acid sequence, 440 residues long: Coenzyme A disulfide reductase (440 aa).

8-33 (GAVAGGATCASQIRRLDKDSEITIFE) is an FAD binding site. Positions 15, 19, 22, 39, and 42 each coordinate substrate. Cysteine 43 functions as the Nucleophile in the catalytic mechanism. The active-site Redox-active is the cysteine 43. Residue lysine 71 participates in substrate binding. 151-166 (ALVVGAGYISLEVLEN) contacts NADP(+). 267 to 277 (TNIPNIYALGD) contributes to the FAD binding site. Histidine 299 is a substrate binding site. FAD is bound at residue tyrosine 419. Lysine 427 contacts substrate.

It belongs to the class-III pyridine nucleotide-disulfide oxidoreductase family. As to quaternary structure, homodimer. Requires FAD as cofactor.

It carries out the reaction NADP(+) + 2 CoA = CoA-disulfide + NADPH + H(+). In terms of biological role, catalyzes specifically the NADPH-dependent reduction of coenzyme A disulfide. The chain is Coenzyme A disulfide reductase from Staphylococcus haemolyticus (strain JCSC1435).